The chain runs to 174 residues: MKTFVLGGGCFWCLDAVYQKTRGVSSVVSGYTGGHVRNPDYYEVCSGTTGHAEVVAVTFDETVVPEEVILDMFFALHDPTTLNRQGYDVGTQYRSSMFYTTTEEKVLFEEAIERAQALWSDPIVTEVSRLPEFHEAEEVHQNYYAKFPYQGYCQVIINPKLAKARKYYSAWLTA.

Cysteine 10 is a catalytic residue.

It belongs to the MsrA Met sulfoxide reductase family.

It catalyses the reaction L-methionyl-[protein] + [thioredoxin]-disulfide + H2O = L-methionyl-(S)-S-oxide-[protein] + [thioredoxin]-dithiol. The enzyme catalyses [thioredoxin]-disulfide + L-methionine + H2O = L-methionine (S)-S-oxide + [thioredoxin]-dithiol. Its function is as follows. Has an important function as a repair enzyme for proteins that have been inactivated by oxidation. Catalyzes the reversible oxidation-reduction of methionine sulfoxide in proteins to methionine. The sequence is that of Peptide methionine sulfoxide reductase MsrA from Paenarthrobacter aurescens (strain TC1).